The primary structure comprises 436 residues: Anaerobic glycerol-3-phosphate dehydrogenase subunit B (436 aa).

Belongs to the anaerobic G-3-P dehydrogenase subunit B family. As to quaternary structure, composed of a catalytic GlpA/B dimer and of membrane bound GlpC. FMN is required as a cofactor.

The catalysed reaction is a quinone + sn-glycerol 3-phosphate = dihydroxyacetone phosphate + a quinol. Its pathway is polyol metabolism; glycerol degradation via glycerol kinase pathway; glycerone phosphate from sn-glycerol 3-phosphate (anaerobic route): step 1/1. Conversion of glycerol 3-phosphate to dihydroxyacetone. Uses fumarate or nitrate as electron acceptor. The polypeptide is Anaerobic glycerol-3-phosphate dehydrogenase subunit B (Vibrio cholerae serotype O1 (strain M66-2)).